The primary structure comprises 377 residues: Opsin-1 (377 aa).

Topologically, residues 1–58 (MDPGPGLAALQAWAAKSPAYGAANQTVVDKVPPDMMHMIDPHWYQFPPMNPLWHALLG) are extracellular. N24 is a glycosylation site (N-linked (GlcNAc...) asparagine). Residues 59-79 (FTIGVLGFVSISGNGMVIYIF) traverse the membrane as a helical segment. Residues 80–92 (MSTKSLKTPSNLL) lie on the Cytoplasmic side of the membrane. A helical transmembrane segment spans residues 93–113 (VVNLAFSDFLMMCAMSPAMVV). Topologically, residues 114-129 (NCYYETWVWGPFACEL) are extracellular. C127 and C204 are joined by a disulfide. Residues 130-150 (YACAGSLFGCASIWTMTMIAF) form a helical membrane-spanning segment. Topologically, residues 151 to 169 (DRYNVIVKGIAAKPMTSNG) are cytoplasmic. The helical transmembrane segment at 170 to 190 (ALLRILGIWVFSLAWTLLPFF) threads the bilayer. Residues 191-220 (GWNRYVPEGNMTACGTDYLSKSWVSRSYIL) lie on the Extracellular side of the membrane. An N-linked (GlcNAc...) asparagine glycan is attached at N200. The chain crosses the membrane as a helical span at residues 221 to 241 (IYSVFVYFLPLLLIIYSYFFI). Over 242-280 (VQAVAAHEKAMREQAKKMNVASLRSSEAANTSAECKLAK) the chain is Cytoplasmic. A helical transmembrane segment spans residues 281 to 301 (VALMTISLWFMAWTPYLVINY). Over 302-312 (TGVFESAPISP) the chain is Extracellular. A helical membrane pass occupies residues 313–335 (LATIWGSLFAKANAVYNPIVYGI). The Cytoplasmic segment spans residues 336–377 (SHPKYQAALYAKFPSLQCQSAPEDAGSVASGTTAVSEEKPAA). The interval 357-377 (PEDAGSVASGTTAVSEEKPAA) is disordered.

It belongs to the G-protein coupled receptor 1 family. Opsin subfamily. In the retina, expression is abundant and uniform in the anterior-posterior and oblique cells of the retinulae, with some expression in the proximal cells. There is no expression in the dorsal rim retinulae (at protein level).

The protein localises to the cell projection. It localises to the rhabdomere membrane. In terms of biological role, visual pigments are the light-absorbing molecules that mediate vision. They consist of an apoprotein, opsin, covalently linked to cis-retinal. May play a role in photoperiodic photoreception. The polypeptide is Opsin-1 (OP1) (Manduca sexta (Tobacco hawkmoth)).